Reading from the N-terminus, the 638-residue chain is RNA exonuclease 3 (638 aa).

The tract at residues 37-136 (AQDQVLEQKE…PPRRAPKEAL (100 aa)) is disordered. Residues 55 to 76 (LKLEPRPEAKETPKDDLRHVSD) show a composition bias toward basic and acidic residues. Residues 77-111 (SGRSTPVKKTTAPATNAENISPVSRQPNIPKNTAT) show a composition bias toward polar residues. The region spanning 408–584 (ICFDCEMGYT…VEDALATGDL (177 aa)) is the Exonuclease domain. Positions 612 to 622 (DSSSNTVSMQT) are enriched in polar residues. Residues 612–638 (DSSSNTVSMQTKLGEGAGAKRAREGTS) are disordered.

This sequence belongs to the REXO1/REXO3 family.

The protein localises to the cytoplasm. It localises to the nucleus. In terms of biological role, 3' to 5' exoribonuclease required for proper 3' end maturation of MRP RNA and of the U5L snRNA. This Emericella nidulans (strain FGSC A4 / ATCC 38163 / CBS 112.46 / NRRL 194 / M139) (Aspergillus nidulans) protein is RNA exonuclease 3 (rex3).